Here is a 206-residue protein sequence, read N- to C-terminus: Large ribosomal subunit protein uL4 (206 aa).

The disordered stretch occupies residues 63-97; it reads MYKQKGTGRARHHSARAPQFRGGGKAHGPVVRSHE. Positions 64-77 are enriched in basic residues; that stretch reads YKQKGTGRARHHSA.

This sequence belongs to the universal ribosomal protein uL4 family. Part of the 50S ribosomal subunit.

Functionally, one of the primary rRNA binding proteins, this protein initially binds near the 5'-end of the 23S rRNA. It is important during the early stages of 50S assembly. It makes multiple contacts with different domains of the 23S rRNA in the assembled 50S subunit and ribosome. Its function is as follows. Forms part of the polypeptide exit tunnel. The chain is Large ribosomal subunit protein uL4 from Rhizobium etli (strain CIAT 652).